The primary structure comprises 738 residues: Prolyl oligopeptidase A (738 aa).

Active-site charge relay system residues include S581, D665, and H701.

This sequence belongs to the peptidase S9A family. In terms of assembly, monomer.

The catalysed reaction is Hydrolysis of Pro-|-Xaa &gt;&gt; Ala-|-Xaa in oligopeptides.. Housekeeping prolyl oligopeptidase (POP) that behaves like a conventional POP by cleaving peptide bonds on the C-terminal side of prolyl residues within peptides that are up to approximately 30 amino acids long. The protein is Prolyl oligopeptidase A of Galerina marginata (strain CBS 339.88).